The following is a 179-amino-acid chain: MSRIGKRPIPIPAKVSVAIDGRLVSVKGPKGELSRELPSGVVVTQEDGNIIVSRADESRLARQRHGLSRTLVANLVEGVDSGFQKRLEIIGVGYRAQVQGTTLILNVGYSNPVQIEPPEGIQFVVENNTNVVVSGISKEVVGNTAARIRAVRPPEPYKGKGIRYAGEVVLRKAGKTGKK.

Belongs to the universal ribosomal protein uL6 family. As to quaternary structure, part of the 50S ribosomal subunit.

This protein binds to the 23S rRNA, and is important in its secondary structure. It is located near the subunit interface in the base of the L7/L12 stalk, and near the tRNA binding site of the peptidyltransferase center. This Synechococcus elongatus (strain ATCC 33912 / PCC 7942 / FACHB-805) (Anacystis nidulans R2) protein is Large ribosomal subunit protein uL6.